Reading from the N-terminus, the 321-residue chain is Genome polyprotein (321 aa).

The Cytoplasmic segment spans residues 1-52 (RNLGKVIDTLTCGFADLMGYIPLVGAPLGGAARALAHGVRVLEDGVNYATGN). The segment at 6-57 (VIDTLTCGFADLMGYIPLVGAPLGGAARALAHGVRVLEDGVNYATGNLPGCS) is interaction with APOA2. Residues 48 to 51 (YATG) are important for lipid droplets localization. A helical transmembrane segment spans residues 53 to 73 (LPGCSFSIFLLALLSCLTVPA). Residues 62–75 (LLALLSCLTVPASA) constitute a propeptide, ER anchor for the core protein, removed in mature form by host signal peptidase. Residues 74 to 242 (SAHQVRNSTG…AGAHWGVLAG (169 aa)) lie on the Lumenal side of the membrane. 3 N-linked (GlcNAc...) asparagine; by host glycosylation sites follow: Asn80, Asn93, and Asn118. An important for fusion region spans residues 149–180 (LVGSATLCSALYVGDLCGSVFLVGQLFTFSPR). Asn189 is a glycosylation site (N-linked (GlcNAc...) asparagine; by host). Residues 243–263 (IAYFSMVGNWAKVLVVLLLFA) form a helical membrane-spanning segment. At 264-321 (GVDAETYTSGGNAGHTMTGIVRFFAPGPKQNVHLINTNGSWHINSTALNCNDSLNTGW) the chain is on the lumenal side. The HVR1 stretch occupies residues 268–294 (ETYTSGGNAGHTMTGIVRFFAPGPKQN). N-linked (GlcNAc...) (high mannose) asparagine; by host glycosylation is found at Asn301, Asn307, and Asn314.

Belongs to the hepacivirus polyprotein family. As to quaternary structure, homooligomer. Interacts with E1 (via C-terminus). Interacts with the non-structural protein 5A. Interacts (via N-terminus) with host STAT1 (via SH2 domain); this interaction results in decreased STAT1 phosphorylation and ubiquitin-mediated proteasome-dependent STAT1 degradation, leading to decreased IFN-stimulated gene transcription. Interacts with host STAT3; this interaction constitutively activates STAT3. Interacts with host LTBR receptor. Interacts with host TNFRSF1A receptor and possibly induces apoptosis. Interacts with host HNRPK. Interacts with host YWHAE. Interacts with host UBE3A/E6AP. Interacts with host DDX3X. Interacts with host APOA2. Interacts with host RXRA protein. Interacts with host SP110 isoform 3/Sp110b; this interaction sequesters the transcriptional corepressor SP110 away from the nucleus. Interacts with host CREB3 nuclear transcription protein; this interaction triggers cell transformation. Interacts with host ACY3. Interacts with host C1QR1. Interacts with host RBM24; this interaction, which enhances the interaction of the mature core protein with 5'-UTR, may inhibit viral translation and favor replication. Interacts with host EIF2AK2/PKR; this interaction induces the autophosphorylation of EIF2AK2. Part of the viral assembly initiation complex composed of NS2, E1, E2, NS3, NS4A, NS5A and the mature core protein. Forms a heterodimer with envelope glycoprotein E2. Interacts with mature core protein. Interacts with protease NS2. The heterodimer E1/E2 interacts with host CLDN1; this interaction plays a role in viral entry into host cell. Interacts with host SPSB2 (via C-terminus). Part of the viral assembly initiation complex composed of NS2, E1, E2, NS3, NS4A, NS5A and the mature core protein. In terms of assembly, forms a heterodimer with envelope glycoprotein E1. Interacts with host CD81 and SCARB1 receptors; these interactions play a role in viral entry into host cell. Interacts with host EIF2AK2/PKR; this interaction inhibits EIF2AK2 and probably allows the virus to evade the innate immune response. Interacts with host CD209/DC-SIGN and CLEC4M/DC-SIGNR. Interact with host SPCS1; this interaction is essential for viral particle assembly. Interacts with protease NS2. The heterodimer E1/E2 interacts with host CLDN1; this interaction plays a role in viral entry into host cell. Part of the viral assembly initiation complex composed of NS2, E1, E2, NS3, NS4A, NS5A and the mature core protein. In terms of processing, specific enzymatic cleavages in vivo yield mature proteins. The structural proteins, core, E1, E2 and p7 are produced by proteolytic processing by host signal peptidases. The core protein precursor is synthesized as a 23 kDa, which is retained in the ER membrane through the hydrophobic signal peptide. Cleavage by the signal peptidase releases the 21 kDa mature core protein. The cleavage of the core protein precursor occurs between aminoacids 176 and 188 but the exact cleavage site is not known. Some degraded forms of the core protein appear as well during the course of infection. The other proteins (p7, NS2, NS3, NS4A, NS4B, NS5A and NS5B) are cleaved by the viral proteases. Autoprocessing between NS2 and NS3 is mediated by the NS2 cysteine protease catalytic domain and regulated by the NS3 N-terminal domain. Post-translationally, phosphorylated by host PKC and PKA. Ubiquitinated; mediated by UBE3A and leading to core protein subsequent proteasomal degradation. In terms of processing, highly N-glycosylated.

It is found in the host endoplasmic reticulum membrane. The protein resides in the host mitochondrion membrane. The protein localises to the virion. It localises to the host cytoplasm. Its subcellular location is the host nucleus. It is found in the host lipid droplet. The protein resides in the virion membrane. Functionally, packages viral RNA to form a viral nucleocapsid, and promotes virion budding. Participates in the viral particle production as a result of its interaction with the non-structural protein 5A. Binds RNA and may function as a RNA chaperone to induce the RNA structural rearrangements taking place during virus replication. Modulates viral translation initiation by interacting with viral IRES and 40S ribosomal subunit. Affects various cell signaling pathways, host immunity and lipid metabolism. Prevents the establishment of cellular antiviral state by blocking the interferon-alpha/beta (IFN-alpha/beta) and IFN-gamma signaling pathways and by blocking the formation of phosphorylated STAT1 and promoting ubiquitin-mediated proteasome-dependent degradation of STAT1. Activates STAT3 leading to cellular transformation. Regulates the activity of cellular genes, including c-myc and c-fos. May repress the promoter of p53, and sequester CREB3 and SP110 isoform 3/Sp110b in the cytoplasm. Represses cell cycle negative regulating factor CDKN1A, thereby interrupting an important check point of normal cell cycle regulation. Targets transcription factors involved in the regulation of inflammatory responses and in the immune response: suppresses TNF-induced NF-kappa-B activation, and activates AP-1. Binds to dendritic cells (DCs) via C1QR1, resulting in down-regulation of T-lymphocytes proliferation. Alters lipid metabolism by interacting with hepatocellular proteins involved in lipid accumulation and storage. Induces up-regulation of FAS promoter activity, and thereby contributes to the increased triglyceride accumulation in hepatocytes (steatosis). Its function is as follows. Forms a heterodimer with envelope glycoprotein E2, which mediates virus attachment to the host cell, virion internalization through clathrin-dependent endocytosis and fusion with host membrane. Fusion with the host cell is most likely mediated by both E1 and E2, through conformational rearrangements of the heterodimer required for fusion rather than a classical class II fusion mechanism. E1/E2 heterodimer binds host apolipoproteins such as APOB and ApoE thereby forming a lipo-viro-particle (LVP). APOE associated to the LVP allows the initial virus attachment to cell surface receptors such as the heparan sulfate proteoglycans (HSPGs), syndecan-1 (SDC1), syndecan-1 (SDC2), the low-density lipoprotein receptor (LDLR) and scavenger receptor class B type I (SCARB1). The cholesterol transfer activity of SCARB1 allows E2 exposure and binding of E2 to SCARB1 and the tetraspanin CD81. E1/E2 heterodimer binding on CD81 activates the epithelial growth factor receptor (EGFR) signaling pathway. Diffusion of the complex E1-E2-EGFR-SCARB1-CD81 to the cell lateral membrane allows further interaction with Claudin 1 (CLDN1) and occludin (OCLN) to finally trigger HCV entry. In terms of biological role, forms a heterodimer with envelope glycoprotein E1, which mediates virus attachment to the host cell, virion internalization through clathrin-dependent endocytosis and fusion with host membrane. Fusion with the host cell is most likely mediated by both E1 and E2, through conformational rearrangements of the heterodimer required for fusion rather than a classical class II fusion mechanism. The interaction between envelope glycoprotein E2 and host apolipoprotein E/APOE allows the proper assembly, maturation and infectivity of the viral particles. This interaction is probably promoted via the up-regulation of cellular autophagy by the virus. E1/E2 heterodimer binds host apolipoproteins such as APOB and APOE thereby forming a lipo-viro-particle (LVP). APOE associated to the LVP allows the initial virus attachment to cell surface receptors such as the heparan sulfate proteoglycans (HSPGs), syndecan-1 (SDC1), syndecan-1 (SDC2), the low-density lipoprotein receptor (LDLR) and scavenger receptor class B type I (SCARB1). The cholesterol transfer activity of SCARB1 allows E2 exposure and binding of E2 to SCARB1 and the tetraspanin CD81. E1/E2 heterodimer binding on CD81 activates the epithelial growth factor receptor (EGFR) signaling pathway. Diffusion of the complex E1-E2-EGFR-SCARB1-CD81 to the cell lateral membrane allows further interaction with Claudin 1 (CLDN1) and occludin (OCLN) to finally trigger HCV entry. Inhibits host EIF2AK2/PKR activation, preventing the establishment of an antiviral state. Viral ligand for CD209/DC-SIGN and CLEC4M/DC-SIGNR, which are respectively found on dendritic cells (DCs), and on liver sinusoidal endothelial cells and macrophage-like cells of lymph node sinuses. These interactions allow the capture of circulating HCV particles by these cells and subsequent facilitated transmission to permissive cells such as hepatocytes and lymphocyte subpopulations. This is Genome polyprotein from Hepatitis C virus (isolate HCT18) (HCV).